Here is a 536-residue protein sequence, read N- to C-terminus: Phosphoenolpyruvate carboxykinase (ATP) (536 aa).

Substrate is bound by residues Arg61, Tyr195, and Lys201. Residues Lys201, His220, and 236–244 (GLSGTGKTT) contribute to the ATP site. Residues Lys201 and His220 each contribute to the Mn(2+) site. Asp257 lines the Mn(2+) pocket. Glu285, Arg322, and Thr447 together coordinate ATP. Arg322 contacts substrate.

Belongs to the phosphoenolpyruvate carboxykinase (ATP) family. It depends on Mn(2+) as a cofactor.

It localises to the cytoplasm. The catalysed reaction is oxaloacetate + ATP = phosphoenolpyruvate + ADP + CO2. The protein operates within carbohydrate biosynthesis; gluconeogenesis. Involved in the gluconeogenesis. Catalyzes the conversion of oxaloacetate (OAA) to phosphoenolpyruvate (PEP) through direct phosphoryl transfer between the nucleoside triphosphate and OAA. This Rhizobium etli (strain ATCC 51251 / DSM 11541 / JCM 21823 / NBRC 15573 / CFN 42) protein is Phosphoenolpyruvate carboxykinase (ATP).